Consider the following 138-residue polypeptide: Nucleoside diphosphate kinase (138 aa).

Residues K9, F57, R85, T91, R102, and N112 each coordinate ATP. H115 functions as the Pros-phosphohistidine intermediate in the catalytic mechanism.

This sequence belongs to the NDK family. As to quaternary structure, homotetramer. Requires Mg(2+) as cofactor.

The protein resides in the cytoplasm. It catalyses the reaction a 2'-deoxyribonucleoside 5'-diphosphate + ATP = a 2'-deoxyribonucleoside 5'-triphosphate + ADP. It carries out the reaction a ribonucleoside 5'-diphosphate + ATP = a ribonucleoside 5'-triphosphate + ADP. Functionally, major role in the synthesis of nucleoside triphosphates other than ATP. The ATP gamma phosphate is transferred to the NDP beta phosphate via a ping-pong mechanism, using a phosphorylated active-site intermediate. The protein is Nucleoside diphosphate kinase of Exiguobacterium sibiricum (strain DSM 17290 / CCUG 55495 / CIP 109462 / JCM 13490 / 255-15).